The chain runs to 123 residues: Small ribosomal subunit protein uS12 (123 aa).

Aspartate 89 is modified (3-methylthioaspartic acid).

Belongs to the universal ribosomal protein uS12 family. Part of the 30S ribosomal subunit. Contacts proteins S8 and S17. May interact with IF1 in the 30S initiation complex.

With S4 and S5 plays an important role in translational accuracy. Functionally, interacts with and stabilizes bases of the 16S rRNA that are involved in tRNA selection in the A site and with the mRNA backbone. Located at the interface of the 30S and 50S subunits, it traverses the body of the 30S subunit contacting proteins on the other side and probably holding the rRNA structure together. The combined cluster of proteins S8, S12 and S17 appears to hold together the shoulder and platform of the 30S subunit. The protein is Small ribosomal subunit protein uS12 of Brucella abortus (strain S19).